Here is a 398-residue protein sequence, read N- to C-terminus: Nicotinate phosphoribosyltransferase 2 (398 aa).

Residue His224 is modified to Phosphohistidine; by autocatalysis.

This sequence belongs to the NAPRTase family. Post-translationally, transiently phosphorylated on a His residue during the reaction cycle. Phosphorylation strongly increases the affinity for substrates and increases the rate of nicotinate D-ribonucleotide production. Dephosphorylation regenerates the low-affinity form of the enzyme, leading to product release.

The catalysed reaction is nicotinate + 5-phospho-alpha-D-ribose 1-diphosphate + ATP + H2O = nicotinate beta-D-ribonucleotide + ADP + phosphate + diphosphate. The protein operates within cofactor biosynthesis; NAD(+) biosynthesis; nicotinate D-ribonucleotide from nicotinate: step 1/1. Its function is as follows. Catalyzes the synthesis of beta-nicotinate D-ribonucleotide from nicotinate and 5-phospho-D-ribose 1-phosphate at the expense of ATP. The sequence is that of Nicotinate phosphoribosyltransferase 2 from Pseudomonas aeruginosa (strain ATCC 15692 / DSM 22644 / CIP 104116 / JCM 14847 / LMG 12228 / 1C / PRS 101 / PAO1).